A 146-amino-acid chain; its full sequence is SPFSAHEEKLILDLWAKVNVAACGGDALSRLLIIYPWKRRYFEHFGKMATDQDVLHNEKIQEHGKKVLASFGEAVKHLDNIQGHFAHLSKLHYEKFHVDCENFKLLGNIIIVVLGMHHPKEFTMETHAAFQKLARHVAAALSVEYY.

A Globin domain is found at 2–146; sequence PFSAHEEKLI…VAAALSVEYY (145 aa). Heme b-binding residues include histidine 63 and histidine 92.

Belongs to the globin family. Heterotetramer of two alpha chains and two beta chains. When oxygenated in vitro, exists virtually only in polymeric form. When deoxygenated, forms tetramers, octamers and larger polymers. Red blood cells.

Involved in oxygen transport from the lung to the various peripheral tissues. This chain is Hemoglobin subunit beta, found in Paleosuchus palpebrosus (Cuvier's smooth-fronted caiman).